Here is a 92-residue protein sequence, read N- to C-terminus: Small ribosomal subunit protein uS19 (92 aa).

Belongs to the universal ribosomal protein uS19 family.

Protein S19 forms a complex with S13 that binds strongly to the 16S ribosomal RNA. The protein is Small ribosomal subunit protein uS19 of Paramagnetospirillum magneticum (strain ATCC 700264 / AMB-1) (Magnetospirillum magneticum).